We begin with the raw amino-acid sequence, 272 residues long: MNIGNLIGIIILFLFIGYFIGNILFGILISKSQGVDIRTLGSGNVGATNVTRNLGRISGAIVMVLDFFKSWFSTFVCLLIYKALRYSIGDESAYANAGVIIYLGGFAAIIGHCFPCFYFYTLFKTKFNFEEAKKYSGGKGVSSAAGFAASISPWMFFICFVLFWSICLISKYVSLASIVTVFLLPIWSLIPHLNYFYMLDVAQANINPIPPFNRPFEIAAIFNYSLNWWYILVTFLLELLTAVLVIYRHKENIVRLIKGEERKAFAKKTNTH.

Helical transmembrane passes span 9 to 29 (IIIL…GILI), 60 to 80 (AIVM…CLLI), 99 to 119 (VIIY…CFYF), 149 to 169 (ASIS…ICLI), 173 to 193 (VSLA…IPHL), and 226 to 246 (LNWW…VLVI).

The protein belongs to the PlsY family. In terms of assembly, probably interacts with PlsX.

It is found in the cell membrane. It carries out the reaction an acyl phosphate + sn-glycerol 3-phosphate = a 1-acyl-sn-glycero-3-phosphate + phosphate. It functions in the pathway lipid metabolism; phospholipid metabolism. In terms of biological role, catalyzes the transfer of an acyl group from acyl-phosphate (acyl-PO(4)) to glycerol-3-phosphate (G3P) to form lysophosphatidic acid (LPA). This enzyme utilizes acyl-phosphate as fatty acyl donor, but not acyl-CoA or acyl-ACP. The chain is Glycerol-3-phosphate acyltransferase from Malacoplasma penetrans (strain HF-2) (Mycoplasma penetrans).